The chain runs to 580 residues: Alpha-thujene synthase, chloroplastic (580 aa).

A chloroplast-targeting transit peptide spans 1-32; sequence MALQLLTPSFSFQHSPSPHKLTTLRYTHHRIR. The (2E)-geranyl diphosphate site is built by arginine 296, aspartate 333, aspartate 337, arginine 473, and aspartate 476. Mg(2+)-binding residues include aspartate 333 and aspartate 337. The DDXXD motif signature appears at 333–337; sequence DDVYD. Residues aspartate 476, threonine 480, and glutamate 484 each coordinate Mg(2+).

Belongs to the terpene synthase family. Tpsb subfamily. As to quaternary structure, monomer. Requires Mg(2+) as cofactor. Mn(2+) serves as cofactor. As to expression, expressed in developing and mature fruits. Barely detectable in leaves and shoots.

The protein localises to the plastid. It localises to the chloroplast. The enzyme catalyses (2E)-geranyl diphosphate = alpha-thujene + diphosphate. The protein operates within secondary metabolite biosynthesis; terpenoid biosynthesis. Functionally, monoterpene synthase (TPS) involved in the biosynthesis of monoterpene natural products used by traditional Chinese medicine to treat headache, inflammation and intoxication. Catalyzes the conversion of (2E)-geranyl diphosphate (GPP) into alpha-thujene. This is Alpha-thujene synthase, chloroplastic from Litsea cubeba (Aromatic litsea).